The primary structure comprises 495 residues: UDP-glycosyltransferase 73C9 (495 aa).

23 to 26 lines the UDP-alpha-D-glucose pocket; that stretch reads GHMI. Catalysis depends on histidine 24, which acts as the Proton acceptor. The active-site Charge relay is the aspartate 129. UDP-alpha-D-glucose is bound by residues 355 to 358, 373 to 381, and 397 to 398; these read WSPQ, HCGWNSTLE, and DQ.

It belongs to the UDP-glycosyltransferase family.

Possesses very weak glucosyltransferase activity toward 2,4,5-trichlorophenol (TCP), when assayed with high concentrations of TCP. This chain is UDP-glycosyltransferase 73C9, found in Barbarea vulgaris (Yellow rocket).